The sequence spans 195 residues: Meiotically up-regulated gene 84 protein (195 aa).

The Cytoplasmic portion of the chain corresponds to 1-84 (MTLTHHSTFI…IMVKVPTYEY (84 aa)). Residues 85–105 (YGFVMYLVSMLGFGVYIVWAL) form a helical membrane-spanning segment. Topologically, residues 106-122 (TPAPVLKFFEIHYYLSR) are lumenal. Residues 123–143 (WWALAIPTWLFVLVIYIHVVL) form a helical membrane-spanning segment. Residues 144–195 (NAYNTEVLTKPFSSLECIVDQYALVGEEDGAAHGRVVDLRLCDVNKQQLEET) lie on the Cytoplasmic side of the membrane.

It is found in the endoplasmic reticulum membrane. Functionally, has a role in meiosis. The protein is Meiotically up-regulated gene 84 protein (mug84) of Schizosaccharomyces pombe (strain 972 / ATCC 24843) (Fission yeast).